Here is a 1042-residue protein sequence, read N- to C-terminus: Sarcoplasmic/endoplasmic reticulum calcium ATPase 2 (1042 aa).

Over 1–48 the chain is Cytoplasmic; the sequence is MENAHTKTVEEVLGHFGVNESTGLSLEQVKKLKERWGSNELPAEEGKT. Ser38 carries the post-translational modification Phosphoserine. The chain crosses the membrane as a helical span at residues 49-69; the sequence is LLELVIEQFEDLLVRILLLAA. The Lumenal portion of the chain corresponds to 70-89; the sequence is CISFVLAWFEEGEETITAFV. Residues 90–110 form a helical membrane-spanning segment; it reads EPFVILLILVANAIVGVWQER. The Cytoplasmic segment spans residues 111 to 253; it reads NAENAIEALK…QERTPLQQKL (143 aa). The helical transmembrane segment at 254–273 threads the bilayer; sequence DEFGEQLSKVISLICIAVWI. The Lumenal segment spans residues 274 to 295; sequence INIGHFNDPVHGGSWIRGAIYY. 3'-nitrotyrosine occurs at positions 294 and 295. A helical membrane pass occupies residues 296 to 313; the sequence is FKIAVALAVAAIPEGLPA. Val304, Ala305, Ile307, and Glu309 together coordinate Ca(2+). The Cytoplasmic segment spans residues 314-756; it reads VITTCLALGT…EEGRAIYNNM (443 aa). Residue Asp351 is the 4-aspartylphosphate intermediate of the active site. Positions 351 and 353 each coordinate Mg(2+). ATP is bound at residue Thr353. Position 441 is a phosphothreonine (Thr441). The ATP site is built by Glu442, Arg489, and Lys514. Ser531 carries the phosphoserine modification. Arg559 is a binding site for ATP. Residues 575–594 form an interaction with HAX1 region; sequence MNLEDSANFIKYETNLTFVG. Ser580 is modified (phosphoserine). ATP contacts are provided by Thr624, Gly625, and Asp626. At Ser663 the chain carries Phosphoserine. ATP contacts are provided by Arg677 and Lys683. Asp702 provides a ligand contact to Mg(2+). ATP is bound at residue Asn705. The helical transmembrane segment at 757-776 threads the bilayer; that stretch reads KQFIRYLISSNVGEVVCIFL. Asn767 and Glu770 together coordinate Ca(2+). At 777–786 the chain is on the lumenal side; sequence TAALGFPEAL. Residues 787 to 807 form a helical membrane-spanning segment; sequence IPVQLLWVNLVTDGLPATALG. The interaction with PLN stretch occupies residues 787 to 807; it reads IPVQLLWVNLVTDGLPATALG. Residues 788–1042 form an interaction with TMEM64 and PDIA3 region; the sequence is PVQLLWVNLV…DTNFSDMFWS (255 aa). Residues Asn795, Thr798, and Asp799 each coordinate Ca(2+). Residues 808–827 are Cytoplasmic-facing; the sequence is FNPPDLDIMNKPPRNPKEPL. Residues 828-850 form a helical membrane-spanning segment; it reads ISGWLFFRYLAIGCYVGAATVGA. The Lumenal segment spans residues 851-896; that stretch reads AAWWFIAADGGPRVTFYQLSHFLQCKEDNPDFEGVDCAVFESPYPM. Cys875 and Cys887 form a disulfide bridge. Residues 897–916 traverse the membrane as a helical segment; sequence TMALSVLVTIEMCNALNSLS. Glu907 contacts Ca(2+). Topologically, residues 917-929 are cytoplasmic; that stretch reads ENQSLLRMPPWEN. Residues 930 to 948 traverse the membrane as a helical segment; that stretch reads IWLVGSICLSMSLHFLILY. The interval 931 to 942 is interaction with PLN; the sequence is WLVGSICLSMSL. The Lumenal portion of the chain corresponds to 949-963; it reads VEPLPLIFQITPLNL. The chain crosses the membrane as a helical span at residues 964-984; the sequence is TQWLMVLKISLPVILMDETLK. At 985–1042 the chain is on the cytoplasmic side; sequence FVARNYLEPGKECVQPATKSCSFSACTDGISWPFVLLIMPLVIWVYSTDTNFSDMFWS.

This sequence belongs to the cation transport ATPase (P-type) (TC 3.A.3) family. Type IIA subfamily. Interacts with sarcolipin (SLN); the interaction inhibits ATP2A2 Ca(2+) affinity. Interacts with phospholamban (PLN); the interaction inhibits ATP2A2 Ca(2+) affinity. Interacts with myoregulin (MRLN). Interacts with ARLN and ERLN; the interactions inhibit ATP2A2 Ca(2+) affinity. Interacts with STRIT1/DWORF; the interaction results in activation of ATP2A2. Interacts with the monomeric forms of SLN, PLN, ARLN, ERLN and STRI1/DWORF. Interacts with HAX1. Interacts with S100A8 and S100A9. Interacts with SLC35G1 and STIM1. Interacts with TMEM203. Interacts with TMEM64 and PDIA3. Interacts with TMX1. Interacts with TMX2. Interacts with VMP1; VMP1 competes with PLN and SLN to prevent them from forming an inhibitory complex with ATP2A2. Interacts with ULK1. Interacts with S100A1 in a Ca(2+)-dependent manner. Interacts with TUNAR. Interacts with FLVCR2; this interaction occurs in the absence of heme and promotes ATP2A2 proteasomal degradation; this complex is dissociated upon heme binding. Interacts with FNIP1. As to quaternary structure, interacts with TRAM2 (via C-terminus). Mg(2+) serves as cofactor. In terms of processing, nitrated under oxidative stress. Nitration on the two tyrosine residues inhibits catalytic activity. Post-translationally, serotonylated on Gln residues by TGM2 in response to hypoxia, leading to its inactivation. As to expression, detected in heart left ventricle (at protein level). Isoform 2 is highly expressed in heart and slow twitch skeletal muscle. Isoform 1 is widely expressed.

The protein localises to the endoplasmic reticulum membrane. The protein resides in the sarcoplasmic reticulum membrane. It catalyses the reaction Ca(2+)(in) + ATP + H2O = Ca(2+)(out) + ADP + phosphate + H(+). Its activity is regulated as follows. Has different conformational states with differential Ca2+ affinity. The E1 conformational state (active form) shows high Ca(2+) affinity, while the E2 state exhibits low Ca(2+) affinity. Binding of ATP allosterically increases its affinity for subsequent binding of Ca2+. Reversibly inhibited by phospholamban (PLN) at low calcium concentrations. PLN inhibits ATP2A2 Ca(2+) affinity by disrupting its allosteric activation by ATP. Inhibited by sarcolipin (SLN) and myoregulin (MRLN). The inhibition is blocked by VMP1. Enhanced by STRIT1/DWORF; STRIT1 increases activity by displacing sarcolipin (SLN), phospholamban (PLN) and myoregulin (MRLN). Stabilizes SERCA2 in its E2 state. This magnesium-dependent enzyme catalyzes the hydrolysis of ATP coupled with the translocation of calcium from the cytosol to the sarcoplasmic reticulum lumen. Involved in autophagy in response to starvation. Upon interaction with VMP1 and activation, controls ER-isolation membrane contacts for autophagosome formation. Also modulates ER contacts with lipid droplets, mitochondria and endosomes. In coordination with FLVCR2 mediates heme-stimulated switching from mitochondrial ATP synthesis to thermogenesis. Its function is as follows. Involved in the regulation of the contraction/relaxation cycle. Acts as a regulator of TNFSF11-mediated Ca(2+) signaling pathways via its interaction with TMEM64 which is critical for the TNFSF11-induced CREB1 activation and mitochondrial ROS generation necessary for proper osteoclast generation. Association between TMEM64 and SERCA2 in the ER leads to cytosolic Ca(2+) spiking for activation of NFATC1 and production of mitochondrial ROS, thereby triggering Ca(2+) signaling cascades that promote osteoclast differentiation and activation. This Sus scrofa (Pig) protein is Sarcoplasmic/endoplasmic reticulum calcium ATPase 2 (ATP2A2).